The chain runs to 68 residues: Large ribosomal subunit protein uL29 (68 aa).

This sequence belongs to the universal ribosomal protein uL29 family.

The sequence is that of Large ribosomal subunit protein uL29 from Erythrobacter litoralis (strain HTCC2594).